Here is a 291-residue protein sequence, read N- to C-terminus: Elongation factor Ts (291 aa).

Residues 80–83 are involved in Mg(2+) ion dislocation from EF-Tu; it reads TDFV.

The protein belongs to the EF-Ts family.

Its subcellular location is the cytoplasm. Associates with the EF-Tu.GDP complex and induces the exchange of GDP to GTP. It remains bound to the aminoacyl-tRNA.EF-Tu.GTP complex up to the GTP hydrolysis stage on the ribosome. This chain is Elongation factor Ts, found in Acinetobacter baumannii (strain AB307-0294).